The sequence spans 223 residues: Serine/threonine/tyrosine-interacting protein B (223 aa).

Residues 28 to 176 enclose the Tyrosine-protein phosphatase domain; that stretch reads EMQEILPGLF…LQEYEAIYLA (149 aa).

This sequence belongs to the protein-tyrosine phosphatase family. Non-receptor class subfamily.

Catalytically inactive phosphatase. This Xenopus laevis (African clawed frog) protein is Serine/threonine/tyrosine-interacting protein B (styx-b).